Here is a 368-residue protein sequence, read N- to C-terminus: 1-deoxy-D-xylulose 5-phosphate reductoisomerase (368 aa).

Positions 7, 8, 9, 10, 31, 32, 33, and 113 each coordinate NADPH. Lys114 contacts 1-deoxy-D-xylulose 5-phosphate. Glu115 contributes to the NADPH binding site. Mn(2+) is bound at residue Asp133. 1-deoxy-D-xylulose 5-phosphate is bound by residues Ser134, Glu135, Ser158, and His181. A Mn(2+)-binding site is contributed by Glu135. Gly187 is an NADPH binding site. 1-deoxy-D-xylulose 5-phosphate contacts are provided by Ser194, Asn199, Lys200, and Glu203. Residue Glu203 participates in Mn(2+) binding.

It belongs to the DXR family. Mg(2+) is required as a cofactor. Mn(2+) serves as cofactor.

The catalysed reaction is 2-C-methyl-D-erythritol 4-phosphate + NADP(+) = 1-deoxy-D-xylulose 5-phosphate + NADPH + H(+). It participates in isoprenoid biosynthesis; isopentenyl diphosphate biosynthesis via DXP pathway; isopentenyl diphosphate from 1-deoxy-D-xylulose 5-phosphate: step 1/6. In terms of biological role, catalyzes the NADPH-dependent rearrangement and reduction of 1-deoxy-D-xylulose-5-phosphate (DXP) to 2-C-methyl-D-erythritol 4-phosphate (MEP). This Helicobacter pylori (strain HPAG1) protein is 1-deoxy-D-xylulose 5-phosphate reductoisomerase.